Consider the following 81-residue polypeptide: Putative defensin-like protein 26 (81 aa).

Residues 1 to 21 (MASLKVFSFALLIVLTFSVIG) form the signal peptide. Cystine bridges form between cysteine 33–cysteine 81 and cysteine 52–cysteine 77.

The protein belongs to the DEFL family.

It localises to the secreted. In Arabidopsis thaliana (Mouse-ear cress), this protein is Putative defensin-like protein 26.